Here is a 331-residue protein sequence, read N- to C-terminus: Betaine-homocysteine S-methyltransferase (331 aa).

Positions 3 to 324 constitute a Hcy-binding domain; the sequence is VNQKWNWDTK…TDVLAIRKYV (322 aa). 3 residues coordinate Zn(2+): Cys243, Cys309, and Cys310.

The protein belongs to the Betaine-homocysteine S-methyltransferase, BHMT family. The cofactor is Zn(2+).

It catalyses the reaction L-homocysteine + glycine betaine = N,N-dimethylglycine + L-methionine. It participates in amino-acid biosynthesis; L-methionine biosynthesis via de novo pathway. Its function is as follows. Involved in the regulation of homocysteine metabolism. Converts betaine and homocysteine to dimethylglycine and methionine, respectively. This Drosophila melanogaster (Fruit fly) protein is Betaine-homocysteine S-methyltransferase.